The following is a 234-amino-acid chain: Interleukin-34 (234 aa).

An N-terminal signal peptide occupies residues 1 to 20 (MPWGLAWLYCLGILLDVALG). Asparagine 99 carries N-linked (GlcNAc...) asparagine glycosylation. The interval 215-234 (PRQPPTSLPRSPSSNHGPLP) is disordered. A compositionally biased stretch (polar residues) spans 222-234 (LPRSPSSNHGPLP).

Belongs to the IL-34 family. Homodimer. Interacts with CSF1R.

It localises to the secreted. Its function is as follows. Cytokine that promotes the proliferation, survival and differentiation of monocytes and macrophages. Promotes the release of pro-inflammatory chemokines, and thereby plays an important role in innate immunity and in inflammatory processes. Plays an important role in the regulation of osteoclast proliferation and differentiation, and in the regulation of bone resorption. Signaling via CSF1R and its downstream effectors stimulates phosphorylation of MAPK1/ERK2 AND MAPK3/ERK1. This chain is Interleukin-34 (Il34), found in Rattus norvegicus (Rat).